Reading from the N-terminus, the 439-residue chain is MNLTPKEIVKFLDDYVIGQKKAKKIIAIALRNRYRRMQLSPELQDDIVPKNILMIGSTGVGKTEIARRLAKMMGFPFIKIEASKYTEVGFVGRDVESMVRDLTNAALNLVKNEQREKNKDKINEFIENKILEKLLPPLPKGISDEKQEEYKNSLEKMRTKLRNGDLDESTIEIEISQNMFDTNPNLPPEMGAMQDIVKVIGVGSKKVKKEMKIKDAKNALKNEAGEKILDQESIKSEALKRSENEGIIFIDEIDKIAVSSGNSNRQDPSKEGVQRDLLPIVEGSNVQTKIGTLKTDHILFIAAGAFHLSKPSDLIPELQGRFPLRVELDSLDDKAFYEILTRPKNSLLKQYSQLLKTENLELDFDNEAIKEIAKIASRANEEMQDIGARRLHTVIEKLLEDLSFEADEYAGKKFVVDKKMVEEKLGDIIENKDLARYIL.

ATP is bound by residues Ile17, 59-64 (GVGKTE), Asp251, Glu317, and Arg389.

It belongs to the ClpX chaperone family. HslU subfamily. A double ring-shaped homohexamer of HslV is capped on each side by a ring-shaped HslU homohexamer. The assembly of the HslU/HslV complex is dependent on binding of ATP.

It is found in the cytoplasm. Functionally, ATPase subunit of a proteasome-like degradation complex; this subunit has chaperone activity. The binding of ATP and its subsequent hydrolysis by HslU are essential for unfolding of protein substrates subsequently hydrolyzed by HslV. HslU recognizes the N-terminal part of its protein substrates and unfolds these before they are guided to HslV for hydrolysis. The polypeptide is ATP-dependent protease ATPase subunit HslU (Campylobacter jejuni subsp. doylei (strain ATCC BAA-1458 / RM4099 / 269.97)).